A 104-amino-acid chain; its full sequence is MAIIPDKQDSSVLERKEQKLKPPSMYKVVLLNDDFTPMEFVVMVVQEYFKKDRETATQIMLKVHREGRGVCGVYTRDIASTKVEQVVTHARQAGHPLQCVMEEA.

It belongs to the ClpS family. Binds to the N-terminal domain of the chaperone ClpA.

In terms of biological role, involved in the modulation of the specificity of the ClpAP-mediated ATP-dependent protein degradation. The chain is ATP-dependent Clp protease adapter protein ClpS from Burkholderia mallei (strain NCTC 10247).